The chain runs to 474 residues: Citrate synthase, mitochondrial (474 aa).

The transit peptide at 1 to 35 (MASTLRLSTSALRSSTLAGKPVVQSVAFNGLRCYS) directs the protein to the mitochondrion. Residues His310, His356, and Asp411 contribute to the active site.

It belongs to the citrate synthase family.

It is found in the mitochondrion matrix. The catalysed reaction is oxaloacetate + acetyl-CoA + H2O = citrate + CoA + H(+). It functions in the pathway carbohydrate metabolism; tricarboxylic acid cycle; isocitrate from oxaloacetate: step 1/2. The chain is Citrate synthase, mitochondrial (citA) from Emericella nidulans (strain FGSC A4 / ATCC 38163 / CBS 112.46 / NRRL 194 / M139) (Aspergillus nidulans).